We begin with the raw amino-acid sequence, 363 residues long: mRNA decay activator protein ZFP36L2-A (363 aa).

The RNA-binding signature appears at 131 to 136 (RYKTEL). 2 C3H1-type zinc fingers span residues 131–159 (RYKT…HGFH) and 169–197 (KYKT…HNAE). The interval 148-189 (YGEKCQFAHGFHELRSLTRHPKYKTELCRTFHTIGFCPYGPR) is RNA-binding. A disordered region spans residues 308 to 349 (ESPVFDAPPSPPDSLSDRDSYLSGSLSSGSLSGSDSPTLDSN). Residues 328-347 (YLSGSLSSGSLSGSDSPTLD) show a composition bias toward low complexity.

In terms of processing, phosphorylated. Widely expressed in adults.

The protein localises to the nucleus. It is found in the cytoplasm. Zinc-finger RNA-binding protein that destabilizes several cytoplasmic AU-rich element (ARE)-containing mRNA transcripts by promoting their poly(A) tail removal or deadenylation, and hence provide a mechanism for attenuating protein synthesis. Acts as a 3'-untranslated region (UTR) ARE mRNA-binding adapter protein to communicate signaling events to the mRNA decay machinery. Functions by recruiting the CCR4-NOT deadenylase complex and probably other components of the cytoplasmic RNA decay machinery to the bound ARE-containing mRNAs, and hence promotes ARE-mediated mRNA deadenylation and decay processes. Binds to 3'-UTR ARE of numerous mRNAs. Also induces the degradation of ARE-containing mRNAs even in absence of poly(A) tail. Required for tubulogenesis during pronephros development. This chain is mRNA decay activator protein ZFP36L2-A (zfp36l2-A), found in Xenopus laevis (African clawed frog).